Here is a 596-residue protein sequence, read N- to C-terminus: Aspartate--tRNA(Asp/Asn) ligase (596 aa).

An L-aspartate-binding site is contributed by glutamate 172. Residues 196 to 199 (QLFK) form an aspartate region. Arginine 218 is an L-aspartate binding site. Residues 218–220 (RDE) and glutamine 227 each bind ATP. Position 450 (histidine 450) interacts with L-aspartate. Glutamate 484 contacts ATP. Arginine 491 is a binding site for L-aspartate. 536–539 (GLDR) serves as a coordination point for ATP.

The protein belongs to the class-II aminoacyl-tRNA synthetase family. Type 1 subfamily. As to quaternary structure, homodimer.

It is found in the cytoplasm. The catalysed reaction is tRNA(Asx) + L-aspartate + ATP = L-aspartyl-tRNA(Asx) + AMP + diphosphate. Aspartyl-tRNA synthetase with relaxed tRNA specificity since it is able to aspartylate not only its cognate tRNA(Asp) but also tRNA(Asn). Reaction proceeds in two steps: L-aspartate is first activated by ATP to form Asp-AMP and then transferred to the acceptor end of tRNA(Asp/Asn). This is Aspartate--tRNA(Asp/Asn) ligase from Acidithiobacillus ferrooxidans (strain ATCC 23270 / DSM 14882 / CIP 104768 / NCIMB 8455) (Ferrobacillus ferrooxidans (strain ATCC 23270)).